A 289-amino-acid polypeptide reads, in one-letter code: 4-hydroxybenzoate octaprenyltransferase (289 aa).

8 helical membrane-spanning segments follow: residues 23–43, 46–66, 99–119, 141–161, 163–183, 213–233, 234–254, and 268–288; these read IGALLLLWPTLWALWVATPGV, LWILAVFVAGVWLMRAAGCVV, LFVVLVALSFLLVLTLNTMTI, LPQVVLGAAFGWSIPMAFAAV, ESVPLSCWLMFLANILWAVAY, LIIGILQIAVLALMALIGWLN, GLGWGYYWSVLVAGALFVYQQ, and AFMNNNYVGLVLFLGLAMSYV.

This sequence belongs to the UbiA prenyltransferase family. The cofactor is Mg(2+).

The protein localises to the cell inner membrane. The catalysed reaction is all-trans-octaprenyl diphosphate + 4-hydroxybenzoate = 4-hydroxy-3-(all-trans-octaprenyl)benzoate + diphosphate. It functions in the pathway cofactor biosynthesis; ubiquinone biosynthesis. Catalyzes the prenylation of para-hydroxybenzoate (PHB) with an all-trans polyprenyl group. Mediates the second step in the final reaction sequence of ubiquinone-8 (UQ-8) biosynthesis, which is the condensation of the polyisoprenoid side chain with PHB, generating the first membrane-bound Q intermediate 3-octaprenyl-4-hydroxybenzoate. This Citrobacter koseri (strain ATCC BAA-895 / CDC 4225-83 / SGSC4696) protein is 4-hydroxybenzoate octaprenyltransferase.